Here is a 208-residue protein sequence, read N- to C-terminus: Small ribosomal subunit protein uS4 (208 aa).

One can recognise an S4 RNA-binding domain in the interval Thr-97–Leu-160.

Belongs to the universal ribosomal protein uS4 family. Part of the 30S ribosomal subunit. Contacts protein S5. The interaction surface between S4 and S5 is involved in control of translational fidelity.

In terms of biological role, one of the primary rRNA binding proteins, it binds directly to 16S rRNA where it nucleates assembly of the body of the 30S subunit. Functionally, with S5 and S12 plays an important role in translational accuracy. The protein is Small ribosomal subunit protein uS4 of Xanthomonas oryzae pv. oryzae (strain MAFF 311018).